We begin with the raw amino-acid sequence, 304 residues long: Aspartate carbamoyltransferase catalytic subunit (304 aa).

Residues Arg49 and Thr50 each contribute to the carbamoyl phosphate site. Lys77 serves as a coordination point for L-aspartate. Arg99, His127, and Gln130 together coordinate carbamoyl phosphate. The L-aspartate site is built by Arg160 and Arg211. The carbamoyl phosphate site is built by Ala252 and Pro253.

Belongs to the aspartate/ornithine carbamoyltransferase superfamily. ATCase family. Heterododecamer (2C3:3R2) of six catalytic PyrB chains organized as two trimers (C3), and six regulatory PyrI chains organized as three dimers (R2).

The catalysed reaction is carbamoyl phosphate + L-aspartate = N-carbamoyl-L-aspartate + phosphate + H(+). The protein operates within pyrimidine metabolism; UMP biosynthesis via de novo pathway; (S)-dihydroorotate from bicarbonate: step 2/3. In terms of biological role, catalyzes the condensation of carbamoyl phosphate and aspartate to form carbamoyl aspartate and inorganic phosphate, the committed step in the de novo pyrimidine nucleotide biosynthesis pathway. The sequence is that of Aspartate carbamoyltransferase catalytic subunit from Bacillus cereus (strain ATCC 10987 / NRS 248).